Reading from the N-terminus, the 361-residue chain is Ribosomal RNA large subunit methyltransferase M (361 aa).

S-adenosyl-L-methionine is bound by residues Ser186, 219 to 222, Asp238, Asp258, and Asp275; that span reads CPGG. Residue Lys304 is the Proton acceptor of the active site.

Belongs to the class I-like SAM-binding methyltransferase superfamily. RNA methyltransferase RlmE family. RlmM subfamily. In terms of assembly, monomer.

Its subcellular location is the cytoplasm. The enzyme catalyses cytidine(2498) in 23S rRNA + S-adenosyl-L-methionine = 2'-O-methylcytidine(2498) in 23S rRNA + S-adenosyl-L-homocysteine + H(+). Functionally, catalyzes the 2'-O-methylation at nucleotide C2498 in 23S rRNA. This is Ribosomal RNA large subunit methyltransferase M from Pseudoalteromonas translucida (strain TAC 125).